The primary structure comprises 360 residues: Photosystem II protein D1 1 (360 aa).

Residues 2-31 are Cytoplasmic-facing; it reads TTTLQRRESANLWERFCNWVTSTDNRLYVG. Residues 32–53 traverse the membrane as a helical segment; the sequence is WFGVIMIPTLLAATICFVIAFI. Residues 54-110 are Lumenal-facing; it reads AAPPVDIDGIREPVSGSLLYGNNIITGAVVPSSNAIGLHFYPIWEAASLDEWLYNGG. A helical membrane pass occupies residues 111–132; that stretch reads PYQLIIFHFLLGASCYMGRQWE. Histidine 118 contacts chlorophyll a. Residues tyrosine 126 and glutamine 130 each contribute to the pheophytin a site. Residues 133–142 are Cytoplasmic-facing; it reads LSYRLGMRPW. A helical transmembrane segment spans residues 143 to 163; it reads ICVAYSAPLASAFAVFLIYPI. Tyrosine 147 is a binding site for pheophytin a. At 164-191 the chain is on the lumenal side; that stretch reads GQGSFSDGMPLGISGTFNFMIVFQAEHN. [CaMn4O5] cluster is bound by residues aspartate 170 and glutamate 189. A helical membrane pass occupies residues 192 to 217; that stretch reads ILMHPFHQLGVAGVFGGALFCAMHGS. Histidine 198 contributes to the chlorophyll a binding site. Residues histidine 215 and 264–265 contribute to the a quinone site; that span reads SF. A Fe cation-binding site is contributed by histidine 215. Topologically, residues 218–272 are cytoplasmic; the sequence is LVTSSLIRETTETESANYGYKFGQEEETYNIVAAHGYFGRLIFQYASFNNSRSLH. Histidine 272 contributes to the Fe cation binding site. The helical transmembrane segment at 273-295 threads the bilayer; that stretch reads FFLAAWPVVGVWFTALGISTMAF. The Lumenal portion of the chain corresponds to 296–344; sequence NLNGFNFNHSVIDAKGNVINTWADIINRANLGMEVMHERNAHNFPLDLA. [CaMn4O5] cluster-binding residues include histidine 332, glutamate 333, aspartate 342, and alanine 344. Residues 345–360 constitute a propeptide that is removed on maturation; that stretch reads SAESAPVAMIAPSING.

It belongs to the reaction center PufL/M/PsbA/D family. In terms of assembly, PSII is composed of 1 copy each of membrane proteins PsbA, PsbB, PsbC, PsbD, PsbE, PsbF, PsbH, PsbI, PsbJ, PsbK, PsbL, PsbM, PsbT, PsbX, PsbY, PsbZ, Psb30/Ycf12, peripheral proteins PsbO, CyanoQ (PsbQ), PsbU, PsbV and a large number of cofactors. It forms dimeric complexes. Precursor protein interacts with Ycf48. Part of a photosystem II (PSII) assembly intermediate complex PSII-I; crystallized from a strain deleted of psbJ, it forms monomeric PSII before addition of the oxygen evolving complex. PSII-I includes 3 assembly factors not found in mature PSII (Psb27, Psb28 and Psb34). In PSII-I the C-terminus of D1 (this subunit) is already processed but not yet found at its final position. The D1/D2 heterodimer binds P680, chlorophylls that are the primary electron donor of PSII, and subsequent electron acceptors. It shares a non-heme iron and each subunit binds pheophytin, quinone, additional chlorophylls, carotenoids and lipids. D1 provides most of the ligands for the Mn4-Ca-O5 cluster of the oxygen-evolving complex (OEC). There is also a Cl(-1) ion associated with D1 and D2, which is required for oxygen evolution. PSII binds additional chlorophylls, carotenoids and specific lipids. is required as a cofactor. In terms of processing, C-terminally processed by CtpA; processing is essential to allow assembly of the oxygen-evolving complex and thus photosynthetic growth. Tyr-161 forms a radical intermediate that is referred to as redox-active TyrZ, YZ or Y-Z.

The protein resides in the cellular thylakoid membrane. It catalyses the reaction 2 a plastoquinone + 4 hnu + 2 H2O = 2 a plastoquinol + O2. Its function is as follows. Photosystem II (PSII) is a light-driven water:plastoquinone oxidoreductase that uses light energy to abstract electrons from H(2)O, generating O(2) and a proton gradient subsequently used for ATP formation. It consists of a core antenna complex that captures photons, and an electron transfer chain that converts photonic excitation into a charge separation. The D1/D2 (PsbA/PsbD) reaction center heterodimer binds P680, the primary electron donor of PSII as well as several subsequent electron acceptors. The protein is Photosystem II protein D1 1 of Thermosynechococcus vestitus (strain NIES-2133 / IAM M-273 / BP-1).